The primary structure comprises 148 residues: Lysozyme C (148 aa).

Residues 1 to 18 form the signal peptide; the sequence is MKALIILGLVLLSVTVQG. In terms of domain architecture, C-type lysozyme spans 19–148; sequence KIFERCELAR…VSQYVKGCGV (130 aa). Intrachain disulfides connect Cys24/Cys146, Cys48/Cys134, Cys83/Cys99, and Cys95/Cys113. Active-site residues include Glu53 and Asp71.

It belongs to the glycosyl hydrolase 22 family. Monomer.

The protein localises to the secreted. The enzyme catalyses Hydrolysis of (1-&gt;4)-beta-linkages between N-acetylmuramic acid and N-acetyl-D-glucosamine residues in a peptidoglycan and between N-acetyl-D-glucosamine residues in chitodextrins.. Functionally, lysozymes have primarily a bacteriolytic function; those in tissues and body fluids are associated with the monocyte-macrophage system and enhance the activity of immunoagents. The protein is Lysozyme C (LYZ) of Pygathrix nemaeus (Red-shanked douc langur).